The sequence spans 1056 residues: 120.7 kDa protein in NOF-FB transposable element (1056 aa).

The interval 716–749 is disordered; it reads KTIKPTEGNDAEDNDTDDENKEMDLSEQPKEKPR. The segment covering 724-736 has biased composition (acidic residues); sequence NDAEDNDTDDENK. Residues 737-749 show a composition bias toward basic and acidic residues; the sequence is EMDLSEQPKEKPR.

Its subcellular location is the nucleus. In terms of biological role, may be involved in the transposition of NOF-FB and other FB elements. The sequence is that of 120.7 kDa protein in NOF-FB transposable element (NOF) from Drosophila melanogaster (Fruit fly).